A 134-amino-acid chain; its full sequence is Profilin-4 (134 aa).

A disulfide bond links Cys13 and Cys118. Residues 84 to 100 (AVIRGKKGSGGITIKKT) carry the Involved in PIP2 interaction motif. Thr114 is subject to Phosphothreonine.

It belongs to the profilin family. In terms of assembly, occurs in many kinds of cells as a complex with monomeric actin in a 1:1 ratio. In terms of processing, phosphorylated by MAP kinases.

It localises to the cytoplasm. The protein localises to the cytoskeleton. In terms of biological role, binds to actin and affects the structure of the cytoskeleton. At high concentrations, profilin prevents the polymerization of actin, whereas it enhances it at low concentrations. The chain is Profilin-4 from Olea europaea (Common olive).